Here is a 704-residue protein sequence, read N- to C-terminus: Cystathionine beta-synthase cbs-1 (704 aa).

Pyridoxal 5'-phosphate contacts are provided by residues N454, 562 to 566 (GTGGT), and S652.

This sequence belongs to the cysteine synthase/cystathionine beta-synthase family. Monomer. As to quaternary structure, does not bind pyridoxal 5'-phosphate, PLP; which may explain why this isoform has virtually undetectable catalytic activity. Requires pyridoxal 5'-phosphate as cofactor.

It is found in the cytoplasm. It catalyses the reaction L-homocysteine + L-serine = L,L-cystathionine + H2O. It functions in the pathway amino-acid biosynthesis; L-cysteine biosynthesis; L-cysteine from L-homocysteine and L-serine: step 1/2. Hydro-lyase catalyzing the first step of the transsulfuration pathway, where the hydroxyl group of L-serine is displaced by L-homocysteine in a beta-replacement reaction to form L-cystathionine, the precursor of L-cysteine. Plays a role in maintaining homocysteine homeostasis. Involved in cold-induced somatic longevity mediated by prostaglandin E2 (PGE2) signals from adult germ cells, perhaps acting via a role in the production of hydrogen sulfide (H2S). Required for normal development. The polypeptide is Cystathionine beta-synthase cbs-1 (Caenorhabditis elegans).